The primary structure comprises 1584 residues: Sterile alpha motif domain-containing protein 9-like (1584 aa).

An SAM domain is found at 14–79 (WTKEHVKKWV…RSYNKLNSKS (66 aa)). Residues 76-122 (NSKSPESDNHDPGQLDNSKPSKTEHQKNPKHTKKEEENSMSSNIDYD) are disordered. Over residues 80 to 112 (PESDNHDPGQLDNSKPSKTEHQKNPKHTKKEEE) the composition is skewed to basic and acidic residues.

As to quaternary structure, interacts with EEA1. As to expression, widely expressed in adult and fetal tissues. Expressed in the cerebellum. Variable expression in tumors. Down-regulated in breast cancer.

Its subcellular location is the early endosome. It localises to the mitochondrion. Functionally, may be involved in endosome fusion. Mediates down-regulation of growth factor signaling via internalization of growth factor receptors. In Homo sapiens (Human), this protein is Sterile alpha motif domain-containing protein 9-like (SAMD9L).